The primary structure comprises 125 residues: Holo-[acyl-carrier-protein] synthase (125 aa).

Asp-8 and Glu-57 together coordinate Mg(2+).

It belongs to the P-Pant transferase superfamily. AcpS family. Mg(2+) serves as cofactor.

It is found in the cytoplasm. The enzyme catalyses apo-[ACP] + CoA = holo-[ACP] + adenosine 3',5'-bisphosphate + H(+). Transfers the 4'-phosphopantetheine moiety from coenzyme A to a Ser of acyl-carrier-protein. This Nitrosomonas eutropha (strain DSM 101675 / C91 / Nm57) protein is Holo-[acyl-carrier-protein] synthase.